A 399-amino-acid polypeptide reads, in one-letter code: Coenzyme A biosynthesis bifunctional protein CoaBC (399 aa).

The segment at 1–190 (MQSLAGKKIL…FAPKILVGKR (190 aa)) is phosphopantothenoylcysteine decarboxylase. Cysteine 159 (proton donor) is an active-site residue. Residues 191–399 (VLITAGPTRE…AVMHLIHEQM (209 aa)) are phosphopantothenate--cysteine ligase. Residues aspartate 279, lysine 289, 307–310 (PDIV), phenylalanine 326, lysine 340, and lysine 344 contribute to the CTP site.

It in the N-terminal section; belongs to the HFCD (homo-oligomeric flavin containing Cys decarboxylase) superfamily. This sequence in the C-terminal section; belongs to the PPC synthetase family. Requires Mg(2+) as cofactor. The cofactor is FMN.

The enzyme catalyses N-[(R)-4-phosphopantothenoyl]-L-cysteine + H(+) = (R)-4'-phosphopantetheine + CO2. The catalysed reaction is (R)-4'-phosphopantothenate + L-cysteine + CTP = N-[(R)-4-phosphopantothenoyl]-L-cysteine + CMP + diphosphate + H(+). The protein operates within cofactor biosynthesis; coenzyme A biosynthesis; CoA from (R)-pantothenate: step 2/5. Its pathway is cofactor biosynthesis; coenzyme A biosynthesis; CoA from (R)-pantothenate: step 3/5. Catalyzes two sequential steps in the biosynthesis of coenzyme A. In the first step cysteine is conjugated to 4'-phosphopantothenate to form 4-phosphopantothenoylcysteine. In the second step the latter compound is decarboxylated to form 4'-phosphopantotheine. In Vibrio cholerae serotype O1 (strain ATCC 39315 / El Tor Inaba N16961), this protein is Coenzyme A biosynthesis bifunctional protein CoaBC.